A 390-amino-acid chain; its full sequence is ATP-sensitive inward rectifier potassium channel 11 (390 aa).

Residues 1-65 (MLSRKGIIPE…LQDVFTTLVD (65 aa)) are Cytoplasmic-facing. Residues Asn48 and Arg50 each contribute to the ATP site. Residues 66–92 (LKWPHTLLIFTMSFLCSWLLFAMVWWL) traverse the membrane as a helical segment. Over 93-116 (IAFAHGDLAPGEGTNVPCVTSIHS) the chain is Extracellular. Cys110 and Cys142 form a disulfide bridge. Residues 117–133 (FSSAFLFSIEVQVTIGF) constitute an intramembrane region (discontinuously helical; Pore-forming). 2 residues coordinate K(+): Thr130 and Phe133. The short motif at 130–135 (TIGFGG) is the Selectivity filter element. Over 134 to 142 (GGRMVTEEC) the chain is Extracellular. A helical transmembrane segment spans residues 143–171 (PLAILILIVQNIVGLMINAIMLGCIFMKT). Topologically, residues 172–390 (AQAHRRAETL…KFSISPDSLS (219 aa)) are cytoplasmic. A 1,2-diacyl-sn-glycero-3-phospho-(1D-myo-inositol-4,5-bisphosphate) is bound at residue Arg176. Tyr330 lines the ATP pocket. A Phosphothreonine; by MAPK1 modification is found at Thr341. Ser385 is modified (phosphoserine; by MAPK1).

This sequence belongs to the inward rectifier-type potassium channel (TC 1.A.2.1) family. KCNJ11 subfamily. Homotetramer; the homotetramer binds four ATP molecules (one ATP per subunit). Forms an heterooctamer with ABCC8/SUR1; one KCNJ11 homotetramer interacts with four ABCC8/SUR1 molecules. Interacts with ABCC9/SUR2. In terms of processing, phosphorylation by MAPK1 results in changes in channel gating that destabilize the closed states and reduce the ATP sensitivity.

It is found in the membrane. It catalyses the reaction K(+)(in) = K(+)(out). With respect to regulation, KATP channels are regulated by cytoplasmic ATP/ADP ratios; ATP inhibits the channel by closing the pore, while ADP activates the channel. Activated by phosphatidylinositol 4,5-biphosphate (PtdIns(4,5)P2). Its function is as follows. Inward rectifier potassium channel that forms the pore of ATP-sensitive potassium channels (KATP), regulating potassium permeability as a function of cytoplasmic ATP and ADP concentrations in many different cells. Inward rectifier potassium channels are characterized by a greater tendency to allow potassium to flow into the cell rather than out of it. Their voltage dependence is regulated by the concentration of extracellular potassium; as external potassium is raised, the voltage range of the channel opening shifts to more positive voltages. The inward rectification is mainly due to the blockage of outward current by internal magnesium. Can be blocked by extracellular barium. In pancreatic cells, it forms KATP channels with ABCC8/SUR1. Can form cardiac and smooth muscle-type KATP channels with ABCC9. This chain is ATP-sensitive inward rectifier potassium channel 11 (Kcnj11), found in Mus musculus (Mouse).